Consider the following 324-residue polypeptide: dITP/XTP pyrophosphatase (324 aa).

The tract at residues 1 to 126 is unknown; the sequence is MTKSIFEYKD…SDNKSDFGDV (126 aa). The interval 127–324 is NTP pyrophosphatase; sequence LLIATRNEGK…EVFPAWQNKQ (198 aa). Residue 131–136 coordinates substrate; sequence TRNEGK. The active-site Proton acceptor is Asp193. Mg(2+) is bound at residue Asp193. Residues Ser194, 277 to 280, Lys300, and 305 to 306 contribute to the substrate site; these read FGYD and HR.

The protein belongs to the HAM1 NTPase family. Homodimer. The cofactor is Mg(2+).

The enzyme catalyses XTP + H2O = XMP + diphosphate + H(+). It carries out the reaction dITP + H2O = dIMP + diphosphate + H(+). It catalyses the reaction ITP + H2O = IMP + diphosphate + H(+). Pyrophosphatase that catalyzes the hydrolysis of nucleoside triphosphates to their monophosphate derivatives, with a high preference for the non-canonical purine nucleotides XTP (xanthosine triphosphate), dITP (deoxyinosine triphosphate) and ITP. Seems to function as a house-cleaning enzyme that removes non-canonical purine nucleotides from the nucleotide pool, thus preventing their incorporation into DNA/RNA and avoiding chromosomal lesions. This is dITP/XTP pyrophosphatase from Streptococcus thermophilus (strain ATCC BAA-250 / LMG 18311).